A 296-amino-acid chain; its full sequence is Light-independent protochlorophyllide reductase iron-sulfur ATP-binding protein (296 aa).

Residues 39-44 and K68 each bind ATP; that span reads GIGKST. S43 is a binding site for Mg(2+). Positions 124 and 158 each coordinate [4Fe-4S] cluster. 209 to 210 is a binding site for ATP; the sequence is NR.

Belongs to the NifH/BchL/ChlL family. Homodimer. Protochlorophyllide reductase is composed of three subunits; ChlL, ChlN and ChlB. [4Fe-4S] cluster is required as a cofactor.

It carries out the reaction chlorophyllide a + oxidized 2[4Fe-4S]-[ferredoxin] + 2 ADP + 2 phosphate = protochlorophyllide a + reduced 2[4Fe-4S]-[ferredoxin] + 2 ATP + 2 H2O. It participates in porphyrin-containing compound metabolism; chlorophyll biosynthesis (light-independent). In terms of biological role, component of the dark-operative protochlorophyllide reductase (DPOR) that uses Mg-ATP and reduced ferredoxin to reduce ring D of protochlorophyllide (Pchlide) to form chlorophyllide a (Chlide). This reaction is light-independent. The L component serves as a unique electron donor to the NB-component of the complex, and binds Mg-ATP. This is Light-independent protochlorophyllide reductase iron-sulfur ATP-binding protein from Prochlorococcus marinus (strain MIT 9211).